A 111-amino-acid chain; its full sequence is High mobility group protein Z (111 aa).

The HMG box DNA-binding region spans 6–72 (PKRPLSAYML…EYNKAVKEYE (67 aa)). Serine 11 carries the phosphoserine modification. The segment at 72–111 (EANGGTDSGAPKKRKKAAAKPAKKAKKKESSEEEEEDESE) is disordered. The segment covering 82-98 (PKKRKKAAAKPAKKAKK) has biased composition (basic residues). Residues 102–111 (SEEEEEDESE) show a composition bias toward acidic residues.

It belongs to the HMGB family.

The protein localises to the nucleus. The protein resides in the chromosome. The polypeptide is High mobility group protein Z (HmgZ) (Drosophila melanogaster (Fruit fly)).